The following is a 373-amino-acid chain: tRNA (guanine(26)-N(2))-dimethyltransferase (373 aa).

In terms of domain architecture, Trm1 methyltransferase spans 2–365; it reads KIISEGETKL…AELSDLVVLI (364 aa). The S-adenosyl-L-methionine site is built by R35, R66, D86, D113, and A114.

Belongs to the class I-like SAM-binding methyltransferase superfamily. Trm1 family.

It carries out the reaction guanosine(26) in tRNA + 2 S-adenosyl-L-methionine = N(2)-dimethylguanosine(26) in tRNA + 2 S-adenosyl-L-homocysteine + 2 H(+). Functionally, dimethylates a single guanine residue at position 26 of a number of tRNAs using S-adenosyl-L-methionine as donor of the methyl groups. The polypeptide is tRNA (guanine(26)-N(2))-dimethyltransferase (Methanococcus maripaludis (Methanococcus deltae)).